Reading from the N-terminus, the 122-residue chain is Large ribosomal subunit protein uL14 (122 aa).

It belongs to the universal ribosomal protein uL14 family. As to quaternary structure, part of the 50S ribosomal subunit. Forms a cluster with proteins L3 and L19. In the 70S ribosome, L14 and L19 interact and together make contacts with the 16S rRNA in bridges B5 and B8.

Binds to 23S rRNA. Forms part of two intersubunit bridges in the 70S ribosome. The sequence is that of Large ribosomal subunit protein uL14 from Streptomyces avermitilis (strain ATCC 31267 / DSM 46492 / JCM 5070 / NBRC 14893 / NCIMB 12804 / NRRL 8165 / MA-4680).